Consider the following 194-residue polypeptide: Glycerol-3-phosphate acyltransferase (194 aa).

5 helical membrane passes run I3–G23, V47–P67, I78–L97, I112–F132, and L153–I173.

Belongs to the PlsY family. In terms of assembly, probably interacts with PlsX.

The protein localises to the cell membrane. It catalyses the reaction an acyl phosphate + sn-glycerol 3-phosphate = a 1-acyl-sn-glycero-3-phosphate + phosphate. It participates in lipid metabolism; phospholipid metabolism. Its function is as follows. Catalyzes the transfer of an acyl group from acyl-phosphate (acyl-PO(4)) to glycerol-3-phosphate (G3P) to form lysophosphatidic acid (LPA). This enzyme utilizes acyl-phosphate as fatty acyl donor, but not acyl-CoA or acyl-ACP. In Macrococcus caseolyticus (strain JCSC5402) (Macrococcoides caseolyticum), this protein is Glycerol-3-phosphate acyltransferase.